We begin with the raw amino-acid sequence, 606 residues long: Homeobox protein B-H1 (606 aa).

A compositionally biased stretch (polar residues) spans 1–14 (MKDSMSILTQTPSE). 4 disordered regions span residues 1-65 (MKDS…PAVA), 104-188 (YKQQ…HPHA), 261-340 (APAG…AFTD), and 508-606 (AAAN…QIQV). The span at 21–40 (QLHHHLSHHHHPALHHHPVL) shows a compositional bias: basic residues. Low complexity predominate over residues 41–65 (QHHYSLQQQHQQQQQQQPPAPPAVA). Over residues 108–118 (QQHHHHHHQSH) the composition is skewed to basic residues. Over residues 119-138 (HNNNNHSGGSSGGTSPTHHN) the composition is skewed to low complexity. Residues 166–188 (HHLHPQSHPHPHPHPHSHPHPHA) are compositionally biased toward basic residues. The segment covering 266–284 (ELDDSSDYHEENEDCDSDE) has biased composition (acidic residues). Positions 286–295 (GSAGGGGGGS) are enriched in gly residues. Positions 297–314 (HMDDHSVCSNGGKDDDGN) are enriched in basic and acidic residues. Over residues 315-325 (SIKSGSTSDMS) the composition is skewed to polar residues. The segment at residues 331–390 (QRKARTAFTDHQLQTLEKSFERQKYLSVQERQELAHKLDLSDCQVKTWYQNRRTKWMRQT) is a DNA-binding region (homeobox). A compositionally biased stretch (pro residues) spans 513 to 522 (GGPPPPPPPS). A compositionally biased stretch (low complexity) spans 523 to 534 (SAAAATGGSPSP). Positions 561 to 576 (ASPPLPLPLARPPSTP) are enriched in pro residues.

This sequence belongs to the Antp homeobox family. As to expression, abundant in the eye-antenna imaginal disk.

Its subcellular location is the nucleus. Functionally required in R1 and R6 receptor cells and primary pigment cells for normal eye development. This is Homeobox protein B-H1 (B-H1) from Drosophila ananassae (Fruit fly).